A 314-amino-acid polypeptide reads, in one-letter code: Pantothenate kinase (314 aa).

93–100 (GSVAVGKS) provides a ligand contact to ATP.

The protein belongs to the prokaryotic pantothenate kinase family.

The protein resides in the cytoplasm. The catalysed reaction is (R)-pantothenate + ATP = (R)-4'-phosphopantothenate + ADP + H(+). Its pathway is cofactor biosynthesis; coenzyme A biosynthesis; CoA from (R)-pantothenate: step 1/5. The chain is Pantothenate kinase from Shewanella denitrificans (strain OS217 / ATCC BAA-1090 / DSM 15013).